The primary structure comprises 123 residues: Small ribosomal subunit protein uS12 (123 aa).

Positions 1–26 (MPTLNQLVRKPRKRPVAKSKVPALDA) are disordered. D89 carries the 3-methylthioaspartic acid modification. Residues 104-123 (TAGVKNRKQSRSKYGAKRPK) are disordered. Residues 108–123 (KNRKQSRSKYGAKRPK) are compositionally biased toward basic residues.

This sequence belongs to the universal ribosomal protein uS12 family. As to quaternary structure, part of the 30S ribosomal subunit. Contacts proteins S8 and S17. May interact with IF1 in the 30S initiation complex.

In terms of biological role, with S4 and S5 plays an important role in translational accuracy. Functionally, interacts with and stabilizes bases of the 16S rRNA that are involved in tRNA selection in the A site and with the mRNA backbone. Located at the interface of the 30S and 50S subunits, it traverses the body of the 30S subunit contacting proteins on the other side and probably holding the rRNA structure together. The combined cluster of proteins S8, S12 and S17 appears to hold together the shoulder and platform of the 30S subunit. The chain is Small ribosomal subunit protein uS12 from Acidithiobacillus ferrooxidans (strain ATCC 23270 / DSM 14882 / CIP 104768 / NCIMB 8455) (Ferrobacillus ferrooxidans (strain ATCC 23270)).